The chain runs to 372 residues: D-alanine--D-alanine ligase (372 aa).

One can recognise an ATP-grasp domain in the interval 145–349; sequence KTVLRAGGIP…CPNLLDQLIE (205 aa). ATP is bound at residue 176-231; that stretch reads DRWGTSELFVKAVSLGSSVATLPVKTETEFTKAVKEVFRYDDRLMVEPRIRGREIE. Mg(2+) contacts are provided by Asp-303, Glu-316, and Asn-318.

It belongs to the D-alanine--D-alanine ligase family. Requires Mg(2+) as cofactor. Mn(2+) serves as cofactor.

It localises to the cytoplasm. The catalysed reaction is 2 D-alanine + ATP = D-alanyl-D-alanine + ADP + phosphate + H(+). Its pathway is cell wall biogenesis; peptidoglycan biosynthesis. Its function is as follows. Cell wall formation. The polypeptide is D-alanine--D-alanine ligase (Coxiella burnetii (strain Dugway 5J108-111)).